The primary structure comprises 114 residues: Fumarate reductase subunit D (114 aa).

3 consecutive transmembrane segments (helical) span residues 27-47 (ICFPVLILILGILLPLGLIPM), 50-70 (IIVFAHTWLGKLVILAVTIFP), and 94-114 (WLFYGLSTLYSIVVLFAVIAL).

The protein belongs to the FrdD family. Part of an enzyme complex containing four subunits: a flavoprotein (FrdA), an iron-sulfur protein (FrdB), and two hydrophobic anchor proteins (FrdC and FrdD).

The protein resides in the cell inner membrane. Functionally, anchors the catalytic components of the fumarate reductase complex to the cell membrane, binds quinones. This chain is Fumarate reductase subunit D, found in Haemophilus ducreyi (strain 35000HP / ATCC 700724).